The chain runs to 210 residues: ATP-dependent Clp protease proteolytic subunit (210 aa).

The active-site Nucleophile is the S106. The active site involves H131.

This sequence belongs to the peptidase S14 family. As to quaternary structure, fourteen ClpP subunits assemble into 2 heptameric rings which stack back to back to give a disk-like structure with a central cavity, resembling the structure of eukaryotic proteasomes.

The protein resides in the cytoplasm. The catalysed reaction is Hydrolysis of proteins to small peptides in the presence of ATP and magnesium. alpha-casein is the usual test substrate. In the absence of ATP, only oligopeptides shorter than five residues are hydrolyzed (such as succinyl-Leu-Tyr-|-NHMec, and Leu-Tyr-Leu-|-Tyr-Trp, in which cleavage of the -Tyr-|-Leu- and -Tyr-|-Trp bonds also occurs).. In terms of biological role, cleaves peptides in various proteins in a process that requires ATP hydrolysis. Has a chymotrypsin-like activity. Plays a major role in the degradation of misfolded proteins. The chain is ATP-dependent Clp protease proteolytic subunit from Azospirillum brasilense.